We begin with the raw amino-acid sequence, 319 residues long: Large ribosomal subunit protein uL10 (319 aa).

Residues 286–295 (ADSGAAAPSA) are compositionally biased toward low complexity. The disordered stretch occupies residues 286–319 (ADSGAAAPSAAKEEEKKEEPEEESDGDLGMSLFD).

It belongs to the universal ribosomal protein uL10 family. In terms of assembly, P0 forms a pentameric complex by interaction with dimers of P1 and P2. Interacts with NSF. Phosphorylated. As to expression, highly expressed in stems, inflorescences and immature seeds (at protein level). Expressed in leaves and mature seeds (at protein level).

Ribosomal protein P0 is the functional equivalent of E.coli protein L10. The chain is Large ribosomal subunit protein uL10 from Oryza sativa subsp. japonica (Rice).